The sequence spans 465 residues: MSQNDAAPGQQLWTGRFTEATDAFVERFSASVQFDARLALQDIQGSEAHARMLAARGVLTEAERDAILQGLAEIRQEVVEERFPWSPQLEDVHMNIEHRLTQRIGEAGKKLHTGRSRNDQIATDVRLFLREAIDTIRAELARFQHGLVELAEREADTIMPGFTHLQVAQPVTFGHHMLAWYEMLERDRDRLADCRRRLNQCPLGAAALAGTSFPIDREATARELGFDAPTRNSLDSVSDRDFAIEFCADASLILVHLSRMAEELVLWTSQQFGFIELPDRFCTGSSIMPQKKNPDVAELVRGKAARAQGSLVQLLTLMKGQPLAYNRDNQEDKEPLFDAVDTARDALTAFADMVPALSVNRERCRAAARAGFATATDLADYLVRQGLAFRDAHEVVGRAVRYATEADRDLAELSLEELQQFSTAIGDDVFAVLTLDGSVAARSHVGGTAPEQVRAQAQAARERLA.

Belongs to the lyase 1 family. Argininosuccinate lyase subfamily.

Its subcellular location is the cytoplasm. It carries out the reaction 2-(N(omega)-L-arginino)succinate = fumarate + L-arginine. It participates in amino-acid biosynthesis; L-arginine biosynthesis; L-arginine from L-ornithine and carbamoyl phosphate: step 3/3. The polypeptide is Argininosuccinate lyase (Halorhodospira halophila (strain DSM 244 / SL1) (Ectothiorhodospira halophila (strain DSM 244 / SL1))).